The following is a 160-amino-acid chain: UPF0178 protein BPP1051 (160 aa).

This sequence belongs to the UPF0178 family.

In Bordetella parapertussis (strain 12822 / ATCC BAA-587 / NCTC 13253), this protein is UPF0178 protein BPP1051.